A 332-amino-acid chain; its full sequence is Adenosine deaminase (332 aa).

Zn(2+) is bound by residues His12 and His14. 3 residues coordinate substrate: His14, Asp16, and Gly170. A Zn(2+)-binding site is contributed by His197. The active-site Proton donor is the Glu200. A Zn(2+)-binding site is contributed by Asp278. Substrate is bound at residue Asp279.

Belongs to the metallo-dependent hydrolases superfamily. Adenosine and AMP deaminases family. Adenosine deaminase subfamily. Zn(2+) is required as a cofactor.

The catalysed reaction is adenosine + H2O + H(+) = inosine + NH4(+). The enzyme catalyses 2'-deoxyadenosine + H2O + H(+) = 2'-deoxyinosine + NH4(+). In terms of biological role, catalyzes the hydrolytic deamination of adenosine and 2-deoxyadenosine. The polypeptide is Adenosine deaminase (Erwinia tasmaniensis (strain DSM 17950 / CFBP 7177 / CIP 109463 / NCPPB 4357 / Et1/99)).